A 1108-amino-acid chain; its full sequence is Folliculin-interacting protein 2 (1108 aa).

The region spanning 38–456 is the uDENN FNIP1/2-type domain; sequence FGLSDIRLLV…TVMPVDHPPI (419 aa). Disordered regions lie at residues 89–112, 209–233, 598–635, and 649–671; these read QESSSSSGSSSSGSSSSHGFGGSL, RTGSNLAHSTPVDMPSRGQNEDRDS, SEGVNTSELGHKPEKNRCKRPEQNSEASSMGFQEAEPD, and QNDQEATQDCSSSPPSCEVPRVR. Positions 91–106 are enriched in low complexity; it reads SSSSSGSSSSGSSSSH. Residues Ser-212 and Ser-217 each carry the phosphoserine modification. Residues 464-1034 form the cDENN FNIP1/2-type domain; it reads TSQSVNMLAK…VSSLLQSILQ (571 aa). Positions 540-905 are interaction with PRKAA1; sequence DDQVINGSKI…DEACVLALLE (366 aa). A compositionally biased stretch (basic and acidic residues) spans 606-620; the sequence is LGHKPEKNRCKRPEQ. A compositionally biased stretch (polar residues) spans 652–663; sequence QEATQDCSSSPP. Phosphoserine is present on residues Ser-720, Ser-721, and Ser-723. Positions 1044-1099 constitute a dDENN FNIP1/2-type domain; the sequence is FCIMHLEDRLQEMYLKSKMLSEYLRGHTRVHVKELSVVLGIESNDLPLLTAIASTH.

This sequence belongs to the FNIP family. As to quaternary structure, homodimer and homomultimer. Heterodimer and heteromultimer with FNIP1. Interacts (via C-terminus) with FLCN (via C-terminus). Phosphorylated FLCN is preferentially bound. Component of the lysosomal folliculin complex (LFC), composed of FLCN, FNIP1 (or FNIP2), RagA/RRAGA or RagB/RRAGB GDP-bound, RagC/RRAGC or RagD/RRAGD GTP-bound, and Ragulator. Interacts with PRKAA1, PRKAB1 and PRKAG1 subunits of 5'-AMP-activated protein kinase. Interacts with HSP70, HSP90AA1, STIP1, PTGES3, CDC37, BRAF, GCR and CDK4. Post-translationally, phosphorylated by AMPK.

It is found in the lysosome membrane. The protein localises to the cytoplasm. In terms of biological role, binding partner of the GTPase-activating protein FLCN: involved in the cellular response to amino acid availability by regulating the non-canonical mTORC1 signaling cascade controlling the MiT/TFE factors TFEB and TFE3. Required to promote FLCN recruitment to lysosomes and interaction with Rag GTPases, leading to activation of the non-canonical mTORC1 signaling. In low-amino acid conditions, component of the lysosomal folliculin complex (LFC) on the membrane of lysosomes, which inhibits the GTPase-activating activity of FLCN, thereby inactivating mTORC1 and promoting nuclear translocation of TFEB and TFE3. Upon amino acid restimulation, disassembly of the LFC complex liberates the GTPase-activating activity of FLCN, leading to activation of mTORC1 and subsequent inactivation of TFEB and TFE3. Together with FLCN, regulates autophagy: following phosphorylation by ULK1, interacts with GABARAP and promotes autophagy. In addition to its role in mTORC1 signaling, also acts as a co-chaperone of HSP90AA1/Hsp90: inhibits the ATPase activity of HSP90AA1/Hsp90, leading to activate both kinase and non-kinase client proteins of HSP90AA1/Hsp90. Acts as a scaffold to load client protein FLCN onto HSP90AA1/Hsp90. Competes with the activating co-chaperone AHSA1 for binding to HSP90AA1, thereby providing a reciprocal regulatory mechanism for chaperoning of client proteins. May play a role in the signal transduction pathway of apoptosis induced by O6-methylguanine-mispaired lesions. The protein is Folliculin-interacting protein 2 of Mus musculus (Mouse).